A 358-amino-acid polypeptide reads, in one-letter code: Peptide chain release factor 1 (358 aa).

Glutamine 233 carries the post-translational modification N5-methylglutamine.

This sequence belongs to the prokaryotic/mitochondrial release factor family. In terms of processing, methylated by PrmC. Methylation increases the termination efficiency of RF1.

Its subcellular location is the cytoplasm. Functionally, peptide chain release factor 1 directs the termination of translation in response to the peptide chain termination codons UAG and UAA. The protein is Peptide chain release factor 1 of Staphylococcus aureus (strain MRSA252).